Reading from the N-terminus, the 350-residue chain is Protein-glutamate methylesterase/protein-glutamine glutaminase (350 aa).

A Response regulatory domain is found at 5 to 122 (KVLCVDDSAL…RDGLIEYSEV (118 aa)). D56 is subject to 4-aspartylphosphate. Residues 152–346 (PFASSEKLVI…ERILTRLGDR (195 aa)) form the CheB-type methylesterase domain. Catalysis depends on residues S165, H191, and D288.

This sequence belongs to the CheB family. Post-translationally, phosphorylated by CheA. Phosphorylation of the N-terminal regulatory domain activates the methylesterase activity.

The protein localises to the cytoplasm. It carries out the reaction [protein]-L-glutamate 5-O-methyl ester + H2O = L-glutamyl-[protein] + methanol + H(+). The catalysed reaction is L-glutaminyl-[protein] + H2O = L-glutamyl-[protein] + NH4(+). Functionally, involved in chemotaxis. Part of a chemotaxis signal transduction system that modulates chemotaxis in response to various stimuli. Catalyzes the demethylation of specific methylglutamate residues introduced into the chemoreceptors (methyl-accepting chemotaxis proteins or MCP) by CheR. Also mediates the irreversible deamidation of specific glutamine residues to glutamic acid. The protein is Protein-glutamate methylesterase/protein-glutamine glutaminase of Bordetella parapertussis (strain 12822 / ATCC BAA-587 / NCTC 13253).